The primary structure comprises 49 residues: Light-harvesting protein B800/850/890 alpha-3 chain (49 aa).

Over 1–14 (MNQARIWLVVKPSV) the chain is Cytoplasmic. Residues 15 to 35 (GLPLLLGVVLLIALLVHGAIL) traverse the membrane as a helical segment. His-31 serves as a coordination point for a bacteriochlorophyll. Over 36-49 (TNTSWYPTYFEGNW) the chain is Periplasmic.

The protein belongs to the antenna complex alpha subunit family. As to quaternary structure, the core complex is formed by different alpha and beta chains, binding bacteriochlorophyll molecules, and arranged most probably in tetrameric structures disposed around the reaction center. The non-pigmented gamma chains may constitute additional components.

It localises to the cell inner membrane. Its function is as follows. Antenna complexes are light-harvesting systems, which transfer the excitation energy to the reaction centers. This chain is Light-harvesting protein B800/850/890 alpha-3 chain, found in Halorhodospira halophila (strain DSM 244 / SL1) (Ectothiorhodospira halophila (strain DSM 244 / SL1)).